Reading from the N-terminus, the 360-residue chain is Beta-1,3-N-acetylglucosaminyltransferase manic fringe (360 aa).

At 1-5 (MILRR) the chain is on the cytoplasmic side. A helical; Signal-anchor for type II membrane protein transmembrane segment spans residues 6-26 (LFHVLPAFAFTLFILVLLDLQ). The Lumenal portion of the chain corresponds to 27-360 (LRTRSDQKPQ…ALSWNQHVMH (334 aa)). Residues 51-74 (TTAENQHRDGAHEKEKAEGQKWTE) are disordered. Positions 55 to 74 (NQHRDGAHEKEKAEGQKWTE) are enriched in basic and acidic residues. Residue arginine 100 coordinates substrate. 2 disulfides stabilise this stretch: cysteine 139–cysteine 150 and cysteine 168–cysteine 231. Position 172 (aspartate 172) interacts with substrate. Aspartate 173 contacts Mn(2+). Asparagine 214 is a glycosylation site (N-linked (GlcNAc...) asparagine). Residue aspartate 261 is part of the active site. Mn(2+) is bound at residue histidine 285. Cysteine 335 and cysteine 344 form a disulfide bridge.

This sequence belongs to the glycosyltransferase 31 family. Mn(2+) serves as cofactor.

It is found in the golgi apparatus membrane. It carries out the reaction 3-O-(alpha-L-fucosyl)-L-threonyl-[EGF-like domain protein] + UDP-N-acetyl-alpha-D-glucosamine = 3-O-(N-acetyl-beta-D-glucosaminyl-(1-&gt;3)-alpha-L-fucosyl)-L-threonyl-[EGF-like domain protein] + UDP + H(+). The enzyme catalyses 3-O-(alpha-L-fucosyl)-L-seryl-[EGF-like domain protein] + UDP-N-acetyl-alpha-D-glucosamine = 3-O-(N-acetyl-beta-D-glucosaminyl-(1-&gt;3)-alpha-L-fucosyl)-L-seryl-[EGF-like domain protein] + UDP + H(+). Its function is as follows. Glycosyltransferase that initiates the elongation of O-linked fucose residues attached to EGF-like repeats in the extracellular domain of Notch molecules. The sequence is that of Beta-1,3-N-acetylglucosaminyltransferase manic fringe from Danio rerio (Zebrafish).